The sequence spans 495 residues: Acyltransferase abl6 (495 aa).

Catalysis depends on His171, which acts as the Proton acceptor.

This sequence belongs to the plant acyltransferase family.

Its function is as follows. Acyltransferase; part of the gene cluster that mediates the biosynthesis of abscisic acid (ABA), a phytohormone that acts antagonistically toward salicylic acid (SA), jasmonic acid (JA) and ethylene (ETH) signaling, to impede plant defense responses. The first step of the pathway catalyzes the reaction from farnesyl diphosphate to alpha-ionylideneethane performed by the alpha-ionylideneethane synthase abl3 via a three-step reaction mechanism involving 2 neutral intermediates, beta-farnesene and allofarnesene. The cytochrome P450 monooxygenase abl1 might then be involved in the conversion of alpha-ionylideneethane to alpha-ionylideneacetic acid. Alpha-ionylideneacetic acid is further converted to abscisic acid in 2 steps involving the cytochrome P450 monooxygenase abl2 and the short-chain dehydrogenase/reductase abl4, via the intermediates 1'-deoxy-ABA or 1',4'-trans-diol-ABA, depending on the order of action of these 2 enzymes. Abl2 is responsible for the hydroxylation of carbon atom C-1' and abl4 might be involved in the oxidation of the C-4' carbon atom. The acyltransferase abl6 seems not essential for the biosynthesis of ABA, but it may acetylate ABA as part of the synthesis of another ABA-related molecule. This Leptosphaeria maculans (strain JN3 / isolate v23.1.3 / race Av1-4-5-6-7-8) (Blackleg fungus) protein is Acyltransferase abl6.